The sequence spans 309 residues: DnaJ protein ERDJ7 (309 aa).

Positions 1 to 36 are cleaved as a signal peptide; the sequence is MSQVGSAGEGSNSMAAAPPPRLLLLVVLLLVPVSNA. Over 37–130 the chain is Lumenal; the sequence is IYCEEDDCYD…YRAYYGHKTD (94 aa). Residues 43 to 107 enclose the J domain; the sequence is DCYDLLGVKQ…STRGQYDYAI (65 aa). N-linked (GlcNAc...) asparagine glycosylation is present at Asn55. The helical transmembrane segment at 131 to 151 threads the bilayer; it reads PRAVLIGLLLIISAFQYLNQF. At 152–219 the chain is on the cytoplasmic side; sequence GRYSKAIETV…GVEKPSLWRL (68 aa). A helical membrane pass occupies residues 220–242; sequence YGVQFILLPYSIGKVLSWKFCWF. The Lumenal portion of the chain corresponds to 243-309; sequence WRYRIKKLPY…EMRKESKRRR (67 aa).

The protein localises to the endoplasmic reticulum membrane. In terms of biological role, may play a role in protein folding in the endoplasmic reticulum. The polypeptide is DnaJ protein ERDJ7 (Oryza sativa subsp. japonica (Rice)).